Reading from the N-terminus, the 248-residue chain is 3-deoxy-manno-octulosonate cytidylyltransferase (248 aa).

It belongs to the KdsB family.

The protein localises to the cytoplasm. It catalyses the reaction 3-deoxy-alpha-D-manno-oct-2-ulosonate + CTP = CMP-3-deoxy-beta-D-manno-octulosonate + diphosphate. Its pathway is nucleotide-sugar biosynthesis; CMP-3-deoxy-D-manno-octulosonate biosynthesis; CMP-3-deoxy-D-manno-octulosonate from 3-deoxy-D-manno-octulosonate and CTP: step 1/1. It functions in the pathway bacterial outer membrane biogenesis; lipopolysaccharide biosynthesis. In terms of biological role, activates KDO (a required 8-carbon sugar) for incorporation into bacterial lipopolysaccharide in Gram-negative bacteria. The sequence is that of 3-deoxy-manno-octulosonate cytidylyltransferase from Leptospira interrogans serogroup Icterohaemorrhagiae serovar copenhageni (strain Fiocruz L1-130).